The primary structure comprises 133 residues: Large ribosomal subunit protein uL14 (133 aa).

This sequence belongs to the universal ribosomal protein uL14 family. Part of the 50S ribosomal subunit. Forms a cluster with proteins L3 and L19. In the 70S ribosome, L14 and L19 interact and together make contacts with the 16S rRNA in bridges B5 and B8.

Its function is as follows. Binds to 23S rRNA. Forms part of two intersubunit bridges in the 70S ribosome. In Gloeobacter violaceus (strain ATCC 29082 / PCC 7421), this protein is Large ribosomal subunit protein uL14.